A 268-amino-acid chain; its full sequence is Nickel import ATP-binding protein NikE (268 aa).

The ABC transporter domain occupies 4–252 (LNVSDLSHHY…SSDAGRVLQN (249 aa)). 45–52 (GRSGCGKS) is a binding site for ATP.

The protein belongs to the ABC transporter superfamily. Nickel importer (TC 3.A.1.5.3) family. The complex is composed of two ATP-binding proteins (NikD and NikE), two transmembrane proteins (NikB and NikC) and a solute-binding protein (NikA).

The protein localises to the cell inner membrane. It carries out the reaction Ni(2+)(out) + ATP + H2O = Ni(2+)(in) + ADP + phosphate + H(+). In terms of biological role, part of the ABC transporter complex NikABCDE involved in nickel import. Responsible for energy coupling to the transport system. This chain is Nickel import ATP-binding protein NikE, found in Shigella dysenteriae serotype 1 (strain Sd197).